The following is a 362-amino-acid chain: sn-glycerol-3-phosphate import ATP-binding protein UgpC (362 aa).

The ABC transporter domain occupies 4 to 235 (LSFRNVKKTY…PASTFVAGFI (232 aa)). 37–44 (GPSGCGKS) serves as a coordination point for ATP.

It belongs to the ABC transporter superfamily. sn-glycerol-3-phosphate importer (TC 3.A.1.1.3) family. The complex is composed of two ATP-binding proteins (UgpC), two transmembrane proteins (UgpA and UgpE) and a solute-binding protein (UgpB).

It localises to the cell inner membrane. It carries out the reaction sn-glycerol 3-phosphate(out) + ATP + H2O = sn-glycerol 3-phosphate(in) + ADP + phosphate + H(+). In terms of biological role, part of the ABC transporter complex UgpBAEC involved in sn-glycerol-3-phosphate (G3P) import. Responsible for energy coupling to the transport system. This is sn-glycerol-3-phosphate import ATP-binding protein UgpC from Bordetella bronchiseptica (strain ATCC BAA-588 / NCTC 13252 / RB50) (Alcaligenes bronchisepticus).